Reading from the N-terminus, the 121-residue chain is Small ribosomal subunit protein uS13 (121 aa).

The disordered stretch occupies residues 91–121; the sequence is HRMSLPVRGQRTRTNARTRRGSRKTVAGRKK. The span at 100–121 shows a compositional bias: basic residues; it reads QRTRTNARTRRGSRKTVAGRKK.

It belongs to the universal ribosomal protein uS13 family. As to quaternary structure, part of the 30S ribosomal subunit. Forms a loose heterodimer with protein S19. Forms two bridges to the 50S subunit in the 70S ribosome.

Located at the top of the head of the 30S subunit, it contacts several helices of the 16S rRNA. In the 70S ribosome it contacts the 23S rRNA (bridge B1a) and protein L5 of the 50S subunit (bridge B1b), connecting the 2 subunits; these bridges are implicated in subunit movement. Contacts the tRNAs in the A and P-sites. In Prochlorococcus marinus (strain AS9601), this protein is Small ribosomal subunit protein uS13.